Consider the following 545-residue polypeptide: Chaperonin GroEL (545 aa).

ATP contacts are provided by residues 29–32 (TMGP), lysine 50, 86–90 (DGTTT), glycine 414, 477–479 (DAA), and aspartate 493.

This sequence belongs to the chaperonin (HSP60) family. Forms a cylinder of 14 subunits composed of two heptameric rings stacked back-to-back. Interacts with the co-chaperonin GroES.

The protein resides in the cytoplasm. The enzyme catalyses ATP + H2O + a folded polypeptide = ADP + phosphate + an unfolded polypeptide.. Together with its co-chaperonin GroES, plays an essential role in assisting protein folding. The GroEL-GroES system forms a nano-cage that allows encapsulation of the non-native substrate proteins and provides a physical environment optimized to promote and accelerate protein folding. The polypeptide is Chaperonin GroEL (Campylobacter jejuni (strain RM1221)).